A 1392-amino-acid polypeptide reads, in one-letter code: MDTEDDPLLQDVWLEEEQEEEEATGETFLGAQKPGPQPGAGGQCCWRHWPLASRPPASGFWSTLGWAFTNPCCAGLVLFLGCSIPMALSAFMFLYYPPLDIDISYNAFEIRNHEASQRFDALTLALKSQFGSWGRNRRDLADFTSETLQRLISEQLQQLHLGNRSRQASRAPRVIPAASLGGPGPYRDTSAAQKPTANRSGRLRRETPPLEDLAANQSEDPRNQRLSKNGRYQPSIPPHAAVAANQSRARRGASRWDYSRAYVSANTQTHAHWRIELIFLARGDAERNIFTSERLVTIHEIERKIMDHPGFREFCWKPHEVLKDLPLGSYSYCSPPSSLMTYFFPTERGGKIYYDGMGQDLADIRGSLELAMTHPEFYWYVDEGLSADNLKSSLLRSEILFGAPLPNYYSVDDRWEEQRAKFQSFVVTYVAMLAKQSTSKVQVLYGGTDLFDYEVRRTFNNDMLLAFISSSCIAALVYILTSCSVFLSFFGIASIGLSCLVALFLYHVVFGIQYLGILNGVAAFVIVGIGVDDVFVFINTYRQATHLEDPQLRMIHTVQTAGKATFFTSLTTAAAYAANVFSQIPAVHDFGLFMSLIVSCCWLAVLVTMPAALGLWSLYLAPLESSCQTSCHQNCSRKTSLHFPGDVFAAPEQVGGSPAQGPIPYLDDDIPLLEVEEEPVSLELGDVSLVSVSPEGLQPASNTGSRGHLIVQLQELLHHWVLWSAVKSRWVIVGLFVSILILSLVFASRLRPASRAPLLFRPDTNIQVLLDLKYNLSAEGISCITCSGLFQEKPHSLQNNIRTSLEKKRRGSGVPWASRPEATLQDFPGTVYISKVKSQGHPAVYRLSLNASLPAPWQAVSPGDGEVPSFQVYRAPFGNFTKKLTACMSTVGLLQAASPSRKWMLTTLACDAKRGWKFDFSFYVATKEQQHTRKLYFAQSHKPPFHGRVCMAPPGCLLSSSPDGPTKGFFFVPSEKVPKARLSATFGFNPCVNTGCGKPAVRPLVDTGAMVFVVFGIIGVNRTRQVDNHVIGDPGSVVYDSSFDLFKEIGHLCHLCKAIAANSELVKPGGAQCLPSGYSISSFLQMLHPECKELPEPNLLPGQLSHGAVGVREGRVQWISMAFESTTYKGKSSFQTYSDYLRWESFLQQQLQALPEGSVLRRGFQTCEHWKQIFMEIVGVQSALCGLVLSLLICVAAVAVFTTHILLLLPVLLSILGIVCLVVTIMYWSGWEMGAVEAISLSILVGSSVDYCVHLVEGYLLAGENLPPHQAEDARTQRQWRTLEAVRHVGVAIVSSALTTVIATVPLFFCIIAPFAKFGKIVALNTGVSILYTLTVSTALLGIMAPSSFTRTRTSFLKALGAVLLAGALGLGACLVLLQSGYKIPLPAGASL.

Residues 1–73 lie on the Cytoplasmic side of the membrane; it reads MDTEDDPLLQ…LGWAFTNPCC (73 aa). The segment at 16–40 is disordered; it reads EEQEEEEATGETFLGAQKPGPQPGA. The helical transmembrane segment at 74-94 threads the bilayer; the sequence is AGLVLFLGCSIPMALSAFMFL. Residues 95 to 462 are Lumenal-facing; it reads YYPPLDIDIS…YEVRRTFNND (368 aa). Residues 162–248 form a disordered region; the sequence is GNRSRQASRA…HAAVAANQSR (87 aa). N163 is a glycosylation site (N-linked (GlcNAc...) asparagine). Over residues 190–199 the composition is skewed to polar residues; it reads SAAQKPTANR. The region spanning 457 to 615 is the SSD domain; it reads RTFNNDMLLA…LVTMPAALGL (159 aa). Residues 463–483 form a helical membrane-spanning segment; that stretch reads MLLAFISSSCIAALVYILTSC. A topological domain (cytoplasmic) is located at residue S484. The helical transmembrane segment at 485–505 threads the bilayer; the sequence is VFLSFFGIASIGLSCLVALFL. At 506–508 the chain is on the lumenal side; it reads YHV. A helical membrane pass occupies residues 509 to 529; the sequence is VFGIQYLGILNGVAAFVIVGI. The Cytoplasmic segment spans residues 530–573; the sequence is GVDDVFVFINTYRQATHLEDPQLRMIHTVQTAGKATFFTSLTTA. Residues 574-594 traverse the membrane as a helical segment; it reads AAYAANVFSQIPAVHDFGLFM. Position 595 (S595) is a topological domain, lumenal. The helical transmembrane segment at 596-616 threads the bilayer; sequence LIVSCCWLAVLVTMPAALGLW. Over 617–729 the chain is Cytoplasmic; the sequence is SLYLAPLESS…WVLWSAVKSR (113 aa). Residues 730-750 traverse the membrane as a helical segment; it reads WVIVGLFVSILILSLVFASRL. Over 751–1182 the chain is Lumenal; the sequence is RPASRAPLLF…IFMEIVGVQS (432 aa). Residue N1021 is glycosylated (N-linked (GlcNAc...) asparagine). Residues 1183–1203 form a helical membrane-spanning segment; the sequence is ALCGLVLSLLICVAAVAVFTT. Residue H1204 is a topological domain, cytoplasmic. The helical transmembrane segment at 1205 to 1225 threads the bilayer; the sequence is ILLLLPVLLSILGIVCLVVTI. At 1226-1291 the chain is on the lumenal side; it reads MYWSGWEMGA…TLEAVRHVGV (66 aa). A helical transmembrane segment spans residues 1292-1312; sequence AIVSSALTTVIATVPLFFCII. Topologically, residues 1313-1320 are cytoplasmic; that stretch reads APFAKFGK. Residues 1321 to 1341 traverse the membrane as a helical segment; the sequence is IVALNTGVSILYTLTVSTALL. The Lumenal segment spans residues 1342–1358; that stretch reads GIMAPSSFTRTRTSFLK. Residues 1359 to 1379 traverse the membrane as a helical segment; it reads ALGAVLLAGALGLGACLVLLQ. The Cytoplasmic portion of the chain corresponds to 1380 to 1392; it reads SGYKIPLPAGASL.

Belongs to the patched family. As to expression, expressed in brain and testis.

It is found in the endoplasmic reticulum membrane. The protein localises to the nucleus membrane. The protein resides in the cytoplasmic vesicle membrane. Its function is as follows. Plays a role in neuronal proliferation and differentiation. Plays a role in the accumulation of cellular cholesterol. Involved in intracellular lipid droplet formation. May contribute to cholesterol homeostasis in neuronal cells. The protein is Protein dispatched homolog 3 of Homo sapiens (Human).